We begin with the raw amino-acid sequence, 261 residues long: Mite allergen Eur m 3 (261 aa).

The N-terminal stretch at Met1–Ala18 is a signal peptide. Residues Asn19 to Thr29 constitute a propeptide that is removed on maturation. Residues Ile30 to Ser260 form the Peptidase S1 domain. Cys54 and Cys70 are disulfide-bonded. Active-site charge relay system residues include His69 and Asp114. Disulfide bonds link Cys181–Cys198 and Cys210–Cys236. The Charge relay system role is filled by Ser214.

It belongs to the peptidase S1 family.

The protein resides in the secreted. This is Mite allergen Eur m 3 (EURM3) from Euroglyphus maynei (Mayne's house dust mite).